The sequence spans 111 residues: PCNA-associated factor (111 aa).

Position 8 is a phosphoserine (serine 8). Residue lysine 15 forms a Glycyl lysine isopeptide (Lys-Gly) (interchain with G-Cter in ubiquitin) linkage. Residues 23–34 (RKVLGSSTSATN) carry the D-box motif. The segment at 23–111 (RKVLGSSTSA…QPDHTNDEKE (89 aa)) is disordered. N6-acetyllysine; alternate is present on lysine 24. Lysine 24 participates in a covalent cross-link: Glycyl lysine isopeptide (Lys-Gly) (interchain with G-Cter in ubiquitin); alternate. A phosphoserine mark is found at serine 28, serine 31, and serine 72. Low complexity predominate over residues 28–40 (SSTSATNSTSVSS). Residues 62–72 (QKGIGEFFRLS) carry the PIP-box motif. Residues 72-81 (SPKDSEKENQ) are compositionally biased toward basic and acidic residues. The KEN box signature appears at 78–80 (KEN). An Initiation motif motif is present at residues 85 to 97 (EAGSSGLGKAKRK).

In terms of assembly, interacts (when monoubiquitinated at Lys-15 and Lys-24) with PCNA. Interacts with isoform 2/p33ING1b of ING1. Interacts with BRCA1. In terms of processing, monoubiquitinated at Lys-15 and Lys-24 during normal S phase, promoting its association with PCNA. Also diubiquitinated at these 2 sites. Following DNA damage, monoubiquitin chains at Lys-15 and Lys-24 are probably extended, leading to disrupt the interaction with PCNA. Polyubiquitinated by the APC/C complex at the mitotic exit, leading to its degradation by the proteasome. In terms of tissue distribution, expressed predominantly in liver, pancreas and placenta. Not detected in heart or brain. Highly expressed in a number of tumors, especially esophageal tumors, in anaplastic thyroid carcinomas, adrenocortical carcinomas, and in non-small-cell lung cancer lines.

The protein resides in the nucleus. Its subcellular location is the cytoplasm. It localises to the perinuclear region. PCNA-binding protein that acts as a regulator of DNA repair during DNA replication. Following DNA damage, the interaction with PCNA is disrupted, facilitating the interaction between monoubiquitinated PCNA and the translesion DNA synthesis DNA polymerase eta (POLH) at stalled replisomes, facilitating the bypass of replication-fork-blocking lesions. Also acts as a regulator of centrosome number. This Homo sapiens (Human) protein is PCNA-associated factor.